Reading from the N-terminus, the 75-residue chain is Small ribosomal subunit protein bS18 (75 aa).

Belongs to the bacterial ribosomal protein bS18 family. Part of the 30S ribosomal subunit. Forms a tight heterodimer with protein bS6.

Binds as a heterodimer with protein bS6 to the central domain of the 16S rRNA, where it helps stabilize the platform of the 30S subunit. This chain is Small ribosomal subunit protein bS18, found in Thermosipho melanesiensis (strain DSM 12029 / CIP 104789 / BI429).